Here is a 192-residue protein sequence, read N- to C-terminus: Immunity protein YqcF (192 aa).

As to quaternary structure, probably interacts with cognate toxin YqcG but not with other non-cognate toxins. The interaction inhibits the toxic activity of YqcG.

It localises to the cytoplasm. Immunity component of one of 6 LXG toxin-immunity modules in this strain. They promote kin selection, mediate competition in biofilms, and drive spatial segregation of different strains, indicating that LXG toxins may help avoid warfare between strains in biofilms. Mediates intercellular competition during biofilm formation; disruption of the operon disadvantages the bacteria, but overexpression of the cognate immunity protein restores growth in competition with wild-type. In situ neutralizes the toxic effect of cognate toxin YqcG. Neutralizes the toxic activity of cognate toxin YqcG upon expression in E.coli. Does not have immunity protein activity on other LXG toxins. The sequence is that of Immunity protein YqcF (yqcF) from Bacillus subtilis (strain 168).